The sequence spans 32 residues: Protamine S4 (32 aa).

The interval glycine 1–cysteine 32 is disordered.

In terms of tissue distribution, testis.

It is found in the nucleus. It localises to the chromosome. Functionally, protamines substitute for histones in the chromatin of sperm during the haploid phase of spermatogenesis. They compact sperm DNA into a highly condensed, stable and inactive complex. The protein is Protamine S4 of Scyliorhinus canicula (Small-spotted catshark).